Here is a 396-residue protein sequence, read N- to C-terminus: MAQSIEAILAELKRGVENIYSEEDLIAKLKENRPLRIKLGADPTAPDIHLGHTVVINKLRQFQQLGHEVIFLIGDFTGMVGDPSGKNTTRPPLTREDVLRNAETYKQQLFKILDPNKTRVVFNSAWLNELGTEGMIRLTSNYTVARMLERDDFKKRFTNNQPIAIHEFIYPLLQGYDSVALQADVELGGTDQTFNLLVGRELQKSAEQKPQVAITLPLLVGLDGEKKMSKSLGNYIGVTEAPNEMFGKVMSISDELMWDWYNLLSFRPLAEITQLKADVDAGKNPRDVKILLAKEIITRFHSEAEADLAEQHFINRFQKGAIPDEMPEFCFNGEIGLATLLKEAGLVASTSEAIRSAQQGGVKIDGQKIDDVRANAQLGTFVYQVGKRKFARVTVK.

Positions 43–52 match the 'HIGH' region motif; sequence PTAPDIHLGH. The short motif at 227-231 is the 'KMSKS' region element; it reads KMSKS. ATP is bound at residue K230. An S4 RNA-binding domain is found at 335 to 395; it reads IGLATLLKEA…GKRKFARVTV (61 aa).

The protein belongs to the class-I aminoacyl-tRNA synthetase family. TyrS type 2 subfamily. As to quaternary structure, homodimer.

The protein resides in the cytoplasm. It carries out the reaction tRNA(Tyr) + L-tyrosine + ATP = L-tyrosyl-tRNA(Tyr) + AMP + diphosphate + H(+). Functionally, catalyzes the attachment of tyrosine to tRNA(Tyr) in a two-step reaction: tyrosine is first activated by ATP to form Tyr-AMP and then transferred to the acceptor end of tRNA(Tyr). The sequence is that of Tyrosine--tRNA ligase from Haemophilus ducreyi (strain 35000HP / ATCC 700724).